The primary structure comprises 128 residues: Small ribosomal subunit protein uS12 (128 aa).

Asp89 is subject to 3-methylthioaspartic acid. The disordered stretch occupies residues 101–128 (SLDTSGVADRRNGRSKYGAKRPKEGAKK).

The protein belongs to the universal ribosomal protein uS12 family. In terms of assembly, part of the 30S ribosomal subunit. Contacts proteins S8 and S17. May interact with IF1 in the 30S initiation complex.

Its function is as follows. With S4 and S5 plays an important role in translational accuracy. Interacts with and stabilizes bases of the 16S rRNA that are involved in tRNA selection in the A site and with the mRNA backbone. Located at the interface of the 30S and 50S subunits, it traverses the body of the 30S subunit contacting proteins on the other side and probably holding the rRNA structure together. The combined cluster of proteins S8, S12 and S17 appears to hold together the shoulder and platform of the 30S subunit. The sequence is that of Small ribosomal subunit protein uS12 from Chloroherpeton thalassium (strain ATCC 35110 / GB-78).